The chain runs to 323 residues: Glyoxylate/hydroxypyruvate reductase B (323 aa).

Catalysis depends on residues R237 and E266. H285 (proton donor) is an active-site residue.

This sequence belongs to the D-isomer specific 2-hydroxyacid dehydrogenase family. GhrB subfamily. As to quaternary structure, homodimer.

It localises to the cytoplasm. The enzyme catalyses glycolate + NADP(+) = glyoxylate + NADPH + H(+). It carries out the reaction (R)-glycerate + NAD(+) = 3-hydroxypyruvate + NADH + H(+). The catalysed reaction is (R)-glycerate + NADP(+) = 3-hydroxypyruvate + NADPH + H(+). Functionally, catalyzes the NADPH-dependent reduction of glyoxylate and hydroxypyruvate into glycolate and glycerate, respectively. The chain is Glyoxylate/hydroxypyruvate reductase B from Klebsiella pneumoniae (strain 342).